The chain runs to 81 residues: Cytochrome b559 subunit alpha (81 aa).

Residues 21–35 traverse the membrane as a helical segment; that stretch reads IIHSITIPMLFIAGW. His23 contacts heme.

It belongs to the PsbE/PsbF family. As to quaternary structure, heterodimer of an alpha subunit and a beta subunit. PSII is composed of 1 copy each of membrane proteins PsbA, PsbB, PsbC, PsbD, PsbE, PsbF, PsbH, PsbI, PsbJ, PsbK, PsbL, PsbM, PsbT, PsbX, PsbY, PsbZ, Psb30/Ycf12, peripheral proteins PsbO, CyanoQ (PsbQ), PsbU, PsbV and a large number of cofactors. It forms dimeric complexes. Requires heme b as cofactor.

Its subcellular location is the cellular thylakoid membrane. In terms of biological role, this b-type cytochrome is tightly associated with the reaction center of photosystem II (PSII). PSII is a light-driven water:plastoquinone oxidoreductase that uses light energy to abstract electrons from H(2)O, generating O(2) and a proton gradient subsequently used for ATP formation. It consists of a core antenna complex that captures photons, and an electron transfer chain that converts photonic excitation into a charge separation. This is Cytochrome b559 subunit alpha from Microcystis aeruginosa (strain NIES-843 / IAM M-2473).